Consider the following 120-residue polypeptide: Aspartate 1-decarboxylase (120 aa).

Catalysis depends on serine 25, which acts as the Schiff-base intermediate with substrate; via pyruvic acid. Serine 25 bears the Pyruvic acid (Ser) mark. Threonine 57 lines the substrate pocket. Catalysis depends on tyrosine 58, which acts as the Proton donor. Substrate is bound at residue 73–75 (GAA).

This sequence belongs to the PanD family. In terms of assembly, heterooctamer of four alpha and four beta subunits. Requires pyruvate as cofactor. In terms of processing, is synthesized initially as an inactive proenzyme, which is activated by self-cleavage at a specific serine bond to produce a beta-subunit with a hydroxyl group at its C-terminus and an alpha-subunit with a pyruvoyl group at its N-terminus.

The protein localises to the cytoplasm. The enzyme catalyses L-aspartate + H(+) = beta-alanine + CO2. The protein operates within cofactor biosynthesis; (R)-pantothenate biosynthesis; beta-alanine from L-aspartate: step 1/1. Its function is as follows. Catalyzes the pyruvoyl-dependent decarboxylation of aspartate to produce beta-alanine. This chain is Aspartate 1-decarboxylase, found in Ralstonia pickettii (strain 12J).